Consider the following 133-residue polypeptide: MGLENLKPAKGSVKKIKRVGRGQGSGMGKTATRGGKGQTARTGYKAKRGFEGGQQPLQRRLPKIGFRTKDSHIYSINVEKNGAIKDLEEITFSSLRALHHFPLYIEGVKLIGKDAKNLASKIKDERIKTSGQK.

A disordered region spans residues 1-64 (MGLENLKPAK…QPLQRRLPKI (64 aa)).

This sequence belongs to the universal ribosomal protein uL15 family. As to quaternary structure, part of the 50S ribosomal subunit.

Its function is as follows. Binds to the 23S rRNA. This is Large ribosomal subunit protein uL15 from Helicobacter pylori (strain Shi470).